Here is a 292-residue protein sequence, read N- to C-terminus: HTH-type transcriptional activator IlvY (292 aa).

One can recognise an HTH lysR-type domain in the interval 1-58 (MEFTDLQIFIHLSDTKNFTKTATQNHMSPSTLSRQIQRLEDELGKTLFIRDNRQVKLT). Residues 18 to 37 (FTKTATQNHMSPSTLSRQIQ) constitute a DNA-binding region (H-T-H motif).

Belongs to the LysR transcriptional regulatory family.

The protein resides in the cytoplasm. Functionally, this protein activates the transcription of the ilvC gene in the presence of acetolactate or acetohydroxybutyrate. IlvY is also a negative regulator of its own expression. The chain is HTH-type transcriptional activator IlvY (ilvY) from Haemophilus influenzae (strain ATCC 51907 / DSM 11121 / KW20 / Rd).